A 367-amino-acid polypeptide reads, in one-letter code: MYDYIIVGSGLFGAVCANELKKLNKKVLVIEKRNHIGGNAYTEDCEGIQIHKYGAHIFHTNDKYIWDYVNDLVEFNRFTNSPLAIYKDKLFNLPFNMNTFHQMWGVKDPQEAQNIINAQKKKYGDKVPENLEEQAISLVGEDLYQALIKGYTEKQWGRSAKELPAFIIKRIPVRFTFDNNYFSDRYQGIPVGGYTKLIEKMLEGVDVKLGIDFLKDKDSLASKAHRIIYTGPIDQYFDYRFGALEYRSLKFETERHEFPNFQGNAVINFTDANVPYTRIIEHKHFDYVETKHTVVTKEYPLEWKVGDEPYYPVNDNKNMELFKKYRELASREDKVIFGGRLAEYKYYDMHQVISAALYQVKNIMSTD.

Residues Phe-12, 31 to 32 (EK), Asn-39, and 56 to 57 (HI) contribute to the FAD site. Phe-12 is a UDP-alpha-D-galactose binding site. Positions 80, 152, 156, and 181 each coordinate UDP-alpha-D-galactose. 212–213 (DF) lines the FAD pocket. Residues Asn-268, Arg-278, and Tyr-311 each contribute to the UDP-alpha-D-galactose site. Residue Arg-340 coordinates FAD. Tyr-346 contributes to the UDP-alpha-D-galactose binding site. Position 347–352 (347–352 (YDMHQV)) interacts with FAD.

As to quaternary structure, homodimer. It depends on FAD as a cofactor.

It carries out the reaction UDP-alpha-D-galactose = UDP-alpha-D-galactofuranose. It participates in bacterial outer membrane biogenesis; lipopolysaccharide biosynthesis. Its function is as follows. Catalyzes the interconversion through a 2-keto intermediate of uridine diphosphogalactopyranose (UDP-GalP) into uridine diphosphogalactofuranose (UDP-GalF). The chain is UDP-galactopyranose mutase (glf) from Escherichia coli (strain K12).